The chain runs to 169 residues: Cyclic pyranopterin monophosphate synthase (169 aa).

Substrate-binding positions include 83 to 85 and 121 to 122; these read LCH and ME. Asp-136 is an active-site residue.

Belongs to the MoaC family. As to quaternary structure, homohexamer; trimer of dimers.

The enzyme catalyses (8S)-3',8-cyclo-7,8-dihydroguanosine 5'-triphosphate = cyclic pyranopterin phosphate + diphosphate. Its pathway is cofactor biosynthesis; molybdopterin biosynthesis. Functionally, catalyzes the conversion of (8S)-3',8-cyclo-7,8-dihydroguanosine 5'-triphosphate to cyclic pyranopterin monophosphate (cPMP). The sequence is that of Cyclic pyranopterin monophosphate synthase from Rhodospirillum centenum (strain ATCC 51521 / SW).